The primary structure comprises 592 residues: Cell division protein FtsZ (592 aa).

Residues 24–28 (GGGGN), 111–113 (GTG), E142, R146, and D190 each bind GTP. The disordered stretch occupies residues 333-362 (KFQKSVSSVRKNDSGINQTASHPQSSQLRS).

It belongs to the FtsZ family. In terms of assembly, homodimer. Polymerizes to form a dynamic ring structure in a strictly GTP-dependent manner. Interacts directly with several other division proteins.

The protein localises to the cytoplasm. Functionally, essential cell division protein that forms a contractile ring structure (Z ring) at the future cell division site. The regulation of the ring assembly controls the timing and the location of cell division. One of the functions of the FtsZ ring is to recruit other cell division proteins to the septum to produce a new cell wall between the dividing cells. Binds GTP and shows GTPase activity. The protein is Cell division protein FtsZ of Bartonella bacilliformis.